Here is a 248-residue protein sequence, read N- to C-terminus: 14-3-3 protein sigma (248 aa).

Serine 5, serine 74, and serine 248 each carry phosphoserine.

This sequence belongs to the 14-3-3 family. As to quaternary structure, homodimer. Interacts with KRT17 and SAMSN1. Found in a complex with XPO7, EIF4A1, ARHGAP1, VPS26A, VPS29 and VPS35. Interacts with GAB2. Interacts with SRPK2. Interacts with COPS6. Interacts with COP1; this interaction leads to proteasomal degradation. Interacts with the 'Thr-369' phosphorylated form of DAPK2. Interacts with PI4KB. Interacts with SLITRK1. Interacts with LRRK2; this interaction is dependent on LRRK2 phosphorylation. Interacts with PKP3 (via N-terminus); the interaction maintains the cytoplasmic pool of PKP3, facilitates PKP3 exchange at desmosomes and restricts PKP3 localization to existing desmosome cell junctions. Interacts with LCP2. Post-translationally, ubiquitinated. Ubiquitination by RFFL induces proteasomal degradation and indirectly regulates p53/TP53 activation. In terms of tissue distribution, present mainly in tissues enriched in stratified squamous keratinizing epithelium.

It is found in the cytoplasm. It localises to the nucleus. Its subcellular location is the secreted. In terms of biological role, adapter protein implicated in the regulation of a large spectrum of both general and specialized signaling pathways. Binds to a large number of partners, usually by recognition of a phosphoserine or phosphothreonine motif. Binding generally results in the modulation of the activity of the binding partner. Promotes cytosolic retention of GBP1 GTPase by binding to phosphorylated GBP1, thereby inhibiting the innate immune response. Also acts as a TP53/p53-regulated inhibitor of G2/M progression. When bound to KRT17, regulates protein synthesis and epithelial cell growth by stimulating Akt/mTOR pathway. Acts to maintain desmosome cell junction adhesion in epithelial cells via interacting with and sequestering PKP3 to the cytoplasm, thereby restricting its translocation to existing desmosome structures and therefore maintaining desmosome protein homeostasis. Also acts to facilitate PKP3 exchange at desmosome plaques, thereby maintaining keratinocyte intercellular adhesion. May also regulate MDM2 autoubiquitination and degradation and thereby activate p53/TP53. The polypeptide is 14-3-3 protein sigma (SFN) (Homo sapiens (Human)).